Reading from the N-terminus, the 137-residue chain is ATP synthase epsilon chain, chloroplastic (137 aa).

This sequence belongs to the ATPase epsilon chain family. In terms of assembly, F-type ATPases have 2 components, CF(1) - the catalytic core - and CF(0) - the membrane proton channel. CF(1) has five subunits: alpha(3), beta(3), gamma(1), delta(1), epsilon(1). CF(0) has three main subunits: a, b and c.

It is found in the plastid. Its subcellular location is the chloroplast thylakoid membrane. In terms of biological role, produces ATP from ADP in the presence of a proton gradient across the membrane. The chain is ATP synthase epsilon chain, chloroplastic from Sorghum bicolor (Sorghum).